A 224-amino-acid chain; its full sequence is Putative endoglucanase X (224 aa).

Residues 147–168 (QTQPTPSPSPTPTDSPLVKKGD) are disordered. In terms of domain architecture, Dockerin spans 162–224 (PLVKKGDVNL…SILKRILLRN (63 aa)).

The catalysed reaction is Endohydrolysis of (1-&gt;4)-beta-D-glucosidic linkages in cellulose, lichenin and cereal beta-D-glucans.. Its function is as follows. This enzyme catalyzes the endohydrolysis of 1,4-beta-glucosidic linkages in cellulose, lichenin and cereal beta-D-glucans. The chain is Putative endoglucanase X (celX) from Acetivibrio thermocellus (Hungateiclostridium thermocellum).